The following is a 193-amino-acid chain: Segregation and condensation protein B (193 aa).

It belongs to the ScpB family. Homodimer. Homodimerization may be required to stabilize the binding of ScpA to the Smc head domains. Component of a cohesin-like complex composed of ScpA, ScpB and the Smc homodimer, in which ScpA and ScpB bind to the head domain of Smc. The presence of the three proteins is required for the association of the complex with DNA.

Its subcellular location is the cytoplasm. Participates in chromosomal partition during cell division. May act via the formation of a condensin-like complex containing Smc and ScpA that pull DNA away from mid-cell into both cell halves. The polypeptide is Segregation and condensation protein B (Streptococcus thermophilus (strain CNRZ 1066)).